Reading from the N-terminus, the 1150-residue chain is Solute carrier family 12 member 6 (1150 aa).

Over M1–L135 the chain is Cytoplasmic. Residues T20–A66 are disordered. Over residues L28–F45 the composition is skewed to low complexity. A phosphoserine mark is found at S32 and S120. The chain crosses the membrane as a discontinuously helical span at residues F136–N158. 2 residues coordinate K(+): S147 and S148. At S148 the chain carries Phosphoserine. N151 contacts chloride. Topologically, residues L159–E165 are extracellular. The segment at Q161 to K181 is disordered. Residues A163–K177 are compositionally biased toward basic and acidic residues. A helical transmembrane segment spans residues H166–F188. Over M189–V211 the chain is Cytoplasmic. Residues V212–G245 form a helical membrane-spanning segment. Residues V246 to E263 are Extracellular-facing. The next 2 helical transmembrane spans lie at F264–A287 and I288–N316. Topologically, residues N317–Q433 are extracellular. Residues C375 and C390 are joined by a disulfide bond. Residues N379, N398, N411, and N428 are each glycosylated (N-linked (GlcNAc...) asparagine). The cysteines at positions 410 and 420 are disulfide-linked. A helical membrane pass occupies residues G434–K454. K(+) contacts are provided by I443, T444, and N446. Residues I443 and T444 each contribute to the chloride site. Residues L447 and W448 each contribute to the chloride site. At G455–K464 the chain is on the cytoplasmic side. The helical transmembrane segment at S465–L487 threads the bilayer. Over L488 to I518 the chain is Extracellular. Residues G519–V545 traverse the membrane as a helical segment. Residues V546 to S568 lie on the Cytoplasmic side of the membrane. Helical transmembrane passes span P569–T589 and G590–H612. I603 is a binding site for chloride. Over S613–I629 the chain is Cytoplasmic. Helical transmembrane passes span A630 to F649 and F650 to T665. Residues L666–S1150 are Cytoplasmic-facing. The scissor helix stretch occupies residues A682–C691. Residue S736 is modified to Phosphoserine. T778 carries the phosphothreonine modification. Position 981 is a phosphoserine (S981). Residue T991 is modified to Phosphothreonine; by OXSR1 and STK39. 3 positions are modified to phosphoserine: S1023, S1029, and S1032. A Phosphothreonine; by OXSR1 and STK39 modification is found at T1048. A Phosphotyrosine modification is found at Y1121. The interval E1133 to S1150 is interaction with CKB.

Belongs to the SLC12A transporter family. K/Cl co-transporter subfamily. Homodimer; adopts a domain-swap conformation at the scissor helices connecting the transmembrane domain and C-terminal domain. Heterodimer with K-Cl cotransporter SLC12A5. Interacts (via C-terminus) with CKB; the interaction may be required for potassium-chloride cotransport activity. In terms of processing, phosphorylated, phosphorylation regulates transporter activity. Phosphorylated at Thr-991 and Thr-1048 by OXSR1/OSR1 and STK39/SPAK downstream of WNK kinases (WNK1, WNK2, WNK3 or WNK4), inhibiting the potassium-chloride cotransport activity. N-glycosylated. Expressed in brain (at protein level). Highly expressed in heart, brain and kidney. Detected at lower levels in skeletal muscle, placenta, lung and pancreas. Detected in umbilical vein endothelial cells. As to expression, more abundant in kidney. In terms of tissue distribution, testis specific.

It is found in the cell membrane. The protein localises to the basolateral cell membrane. It catalyses the reaction K(+)(in) + chloride(in) = K(+)(out) + chloride(out). With respect to regulation, inhibited following phosphorylation by OXSR1/OSR1 and STK39/SPAK: phosphorylation takes place downstream of WNK kinases (WNK1, WNK2, WNK3 or WNK4) in response to hyperosmotic stress and subsequent cell shrinkage. Activated by N-ethylmaleimide (NEM). Inhibited by DIOA, bumetanide and furosemide. Its function is as follows. Mediates electroneutral potassium-chloride cotransport when activated by cell swelling. May contribute to cell volume homeostasis in single cells. Mediates electroneutral potassium-chloride cotransport when activated by cell swelling. May contribute to cell volume homeostasis in single cells. In terms of biological role, mediates electroneutral potassium-chloride cotransport when activated by cell swelling. May contribute to cell volume homeostasis in single cells. This Homo sapiens (Human) protein is Solute carrier family 12 member 6.